We begin with the raw amino-acid sequence, 293 residues long: Probable endoribonuclease YicC (293 aa).

This sequence belongs to the YicC/YloC family. Requires a divalent metal cation as cofactor.

In terms of biological role, negatively modulates sporulation, probably in response to nutrient conditions. Effects expression of sporulation regulator spo0A in an indirect manner, possibly via repression of the sinRR' operon. Functionally, probably a ssRNA endonuclease. Might contribute to small RNA (sRNA) regulation. This is Probable endoribonuclease YicC from Clostridioides difficile (strain 630) (Peptoclostridium difficile).